The following is a 113-amino-acid chain: Large ribosomal subunit protein uL22 (113 aa).

It belongs to the universal ribosomal protein uL22 family. In terms of assembly, part of the 50S ribosomal subunit.

In terms of biological role, this protein binds specifically to 23S rRNA; its binding is stimulated by other ribosomal proteins, e.g. L4, L17, and L20. It is important during the early stages of 50S assembly. It makes multiple contacts with different domains of the 23S rRNA in the assembled 50S subunit and ribosome. The globular domain of the protein is located near the polypeptide exit tunnel on the outside of the subunit, while an extended beta-hairpin is found that lines the wall of the exit tunnel in the center of the 70S ribosome. The chain is Large ribosomal subunit protein uL22 from Pelotomaculum thermopropionicum (strain DSM 13744 / JCM 10971 / SI).